The sequence spans 217 residues: Cytidylate kinase (217 aa).

Position 10-18 (10-18 (GPAGAGKST)) interacts with ATP.

It belongs to the cytidylate kinase family. Type 1 subfamily.

The protein resides in the cytoplasm. It carries out the reaction CMP + ATP = CDP + ADP. The catalysed reaction is dCMP + ATP = dCDP + ADP. This Clostridium botulinum (strain Okra / Type B1) protein is Cytidylate kinase.